Reading from the N-terminus, the 446-residue chain is D(1A) dopamine receptor (446 aa).

The Extracellular portion of the chain corresponds to 1–23 (MRTLNTSAMDGTGLVVERDFSVR). N-linked (GlcNAc...) asparagine glycosylation occurs at Asn5. The chain crosses the membrane as a helical span at residues 24 to 49 (ILTACFLSLLILSTLLGNTLVCAAVI). At 50–60 (RFRHLRSKVTN) the chain is on the cytoplasmic side. The helical transmembrane segment at 61 to 87 (FFVISLAVSDLLVAVLVMPWKAVAEIA) threads the bilayer. Over 88–96 (GFWPFGSFC) the chain is Extracellular. Cys96 and Cys186 are disulfide-bonded. Residues 97 to 119 (NIWVAFDIMCSTASILNLCVISV) traverse the membrane as a helical segment. At 120 to 138 (DRYWAISSPFRYERKMTPK) the chain is on the cytoplasmic side. Residues 139 to 163 (AAFILISVAWTLSVLISFIPVQLSW) form a helical membrane-spanning segment. Topologically, residues 164–192 (HKAKPTSPSDGNATSLAETIDNCDSSLSR) are extracellular. Asn175 carries an N-linked (GlcNAc...) asparagine glycan. The chain crosses the membrane as a helical span at residues 193-218 (TYAISSSVISFYIPVAIMIVTYTRIY). The Cytoplasmic segment spans residues 219 to 272 (RIAQKQIRRIAALERAAVHAKNCQTTTGNGKPVECSQPESSFKMSFKRETKVLK). A helical membrane pass occupies residues 273–299 (TLSVIMGVFVCCWLPFFILNCILPFCG). Over 300-312 (SGETQPFCIDSIT) the chain is Extracellular. The helical transmembrane segment at 313 to 337 (FDVFVWFGWANSSLNPIIYAFNADF) threads the bilayer. Residues 338–446 (RKAFSTLLGC…PITQNGQHPT (109 aa)) are Cytoplasmic-facing. 2 S-palmitoyl cysteine lipidation sites follow: Cys347 and Cys351.

It belongs to the G-protein coupled receptor 1 family. Interacts with DNAJC14 via its C-terminus. Interacts with DRD2. Interacts with DORIP1.

It localises to the cell membrane. It is found in the endoplasmic reticulum membrane. Its subcellular location is the cell projection. The protein resides in the cilium membrane. The protein localises to the dendrite. It localises to the dendritic spine. Its function is as follows. Dopamine receptor whose activity is mediated by G proteins which activate adenylyl cyclase. The protein is D(1A) dopamine receptor (DRD1) of Macaca mulatta (Rhesus macaque).